We begin with the raw amino-acid sequence, 234 residues long: Ubiquitin carboxyl-terminal hydrolase 3 (234 aa).

The region spanning 12-232 (RWLPLESNPD…LNFNLIAISK (221 aa)) is the UCH catalytic domain. Cys101 (nucleophile) is an active-site residue. The Proton donor role is filled by His172.

It belongs to the peptidase C12 family.

It catalyses the reaction Thiol-dependent hydrolysis of ester, thioester, amide, peptide and isopeptide bonds formed by the C-terminal Gly of ubiquitin (a 76-residue protein attached to proteins as an intracellular targeting signal).. The protein is Ubiquitin carboxyl-terminal hydrolase 3 of Arabidopsis thaliana (Mouse-ear cress).